The sequence spans 433 residues: ATP-dependent protease ATPase subunit HslU (433 aa).

Residues V18, 60-65, D246, E311, and R383 each bind ATP; that span reads GVGKTE.

It belongs to the ClpX chaperone family. HslU subfamily. A double ring-shaped homohexamer of HslV is capped on each side by a ring-shaped HslU homohexamer. The assembly of the HslU/HslV complex is dependent on binding of ATP.

The protein resides in the cytoplasm. ATPase subunit of a proteasome-like degradation complex; this subunit has chaperone activity. The binding of ATP and its subsequent hydrolysis by HslU are essential for unfolding of protein substrates subsequently hydrolyzed by HslV. HslU recognizes the N-terminal part of its protein substrates and unfolds these before they are guided to HslV for hydrolysis. This is ATP-dependent protease ATPase subunit HslU from Rhodopseudomonas palustris (strain BisA53).